Consider the following 258-residue polypeptide: tRNA (guanine-N(7)-)-methyltransferase (258 aa).

S-adenosyl-L-methionine-binding positions include Gly76, 99-100 (EI), 132-133 (NA), and Leu152. Residue Asp155 is part of the active site. 230 to 232 (TEE) lines the S-adenosyl-L-methionine pocket.

This sequence belongs to the class I-like SAM-binding methyltransferase superfamily. TrmB family.

It is found in the nucleus. The catalysed reaction is guanosine(46) in tRNA + S-adenosyl-L-methionine = N(7)-methylguanosine(46) in tRNA + S-adenosyl-L-homocysteine. It participates in tRNA modification; N(7)-methylguanine-tRNA biosynthesis. In terms of biological role, catalyzes the formation of N(7)-methylguanine at position 46 (m7G46) in tRNA. The polypeptide is tRNA (guanine-N(7)-)-methyltransferase (Brugia malayi (Filarial nematode worm)).